Here is a 361-residue protein sequence, read N- to C-terminus: GDSL esterase/lipase At4g18970 (361 aa).

The N-terminal stretch at 1 to 22 (MARVCVMMMAMAIAMAMNIAMG) is a signal peptide. The active-site Nucleophile is Ser35. Residues Asp325 and His328 contribute to the active site.

Belongs to the 'GDSL' lipolytic enzyme family.

It localises to the secreted. This Arabidopsis thaliana (Mouse-ear cress) protein is GDSL esterase/lipase At4g18970.